The following is a 446-amino-acid chain: Protein adenylyltransferase FICD (446 aa).

The Cytoplasmic portion of the chain corresponds to Met-1–Arg-18. Residues Ala-19–Glu-39 form a helical; Signal-anchor for type II membrane protein membrane-spanning segment. The Lumenal portion of the chain corresponds to His-40–Thr-446. 2 TPR repeats span residues Ala-94–His-127 and Val-128–Asn-161. Positions Thr-218–Gly-223 match the Inhibitory (S/T)XXXE(G/N) motif motif. Glu-222 serves as a coordination point for ATP. N-linked (GlcNAc...) asparagine glycosylation is present at Asn-263. The Fido domain maps to Val-273–Lys-408. Val-304–His-307 is a binding site for ATP. His-351 is an active-site residue. ATP-binding positions include Asp-355–Arg-362, Tyr-387–Tyr-388, and Asn-395.

Belongs to the fic family. As to quaternary structure, homodimer. It depends on Mg(2+) as a cofactor. Mn(2+) is required as a cofactor.

The protein localises to the endoplasmic reticulum membrane. The enzyme catalyses L-tyrosyl-[protein] + ATP = O-(5'-adenylyl)-L-tyrosyl-[protein] + diphosphate. It catalyses the reaction 3-O-(5'-adenylyl)-L-threonyl-[protein] + H2O = L-threonyl-[protein] + AMP + H(+). The catalysed reaction is L-threonyl-[protein] + ATP = 3-O-(5'-adenylyl)-L-threonyl-[protein] + diphosphate. Its activity is regulated as follows. The side chain of Glu-222 determines which of the two opposing activities (AMPylase or de-AMPylase) will take place. In response to endoplasmic reticulum stress, mediates de-AMPylase activity. Adenylyltransferase activity is inhibited by the inhibitory helix present at the N-terminus: Glu-222 binds ATP and competes with ATP-binding at Arg-362, thereby preventing adenylyltransferase activity. In unstressed cells, disengagement of Glu-222 promotes adenylyltransferase activity. Activation dissociates ATP-binding from Glu-222, allowing ordered binding of the entire ATP moiety with the alpha-phosphate in an orientation that is productive for accepting an incoming target hydroxyl side chain. Its function is as follows. Protein that can both mediate the addition of adenosine 5'-monophosphate (AMP) to specific residues of target proteins (AMPylation), and the removal of the same modification from target proteins (de-AMPylation), depending on the context. The side chain of Glu-222 determines which of the two opposing activities (AMPylase or de-AMPylase) will take place. Acts as a key regulator of the ERN1/IRE1-mediated unfolded protein response (UPR) by mediating AMPylation or de-AMPylation of HSPA5/BiP. In unstressed cells, acts as an adenylyltransferase by mediating AMPylation of HSPA5/BiP at 'Thr-518', thereby inactivating it. In response to endoplasmic reticulum stress, acts as a phosphodiesterase by mediating removal of ATP (de-AMPylation) from HSPA5/BiP at 'Thr-518', leading to restore HSPA5/BiP activity. This chain is Protein adenylyltransferase FICD, found in Xenopus tropicalis (Western clawed frog).